The primary structure comprises 243 residues: 1-(5-phosphoribosyl)-5-[(5-phosphoribosylamino)methylideneamino] imidazole-4-carboxamide isomerase (243 aa).

The active-site Proton acceptor is the aspartate 8. The active-site Proton donor is aspartate 129.

It belongs to the HisA/HisF family.

The protein localises to the cytoplasm. The enzyme catalyses 1-(5-phospho-beta-D-ribosyl)-5-[(5-phospho-beta-D-ribosylamino)methylideneamino]imidazole-4-carboxamide = 5-[(5-phospho-1-deoxy-D-ribulos-1-ylimino)methylamino]-1-(5-phospho-beta-D-ribosyl)imidazole-4-carboxamide. It functions in the pathway amino-acid biosynthesis; L-histidine biosynthesis; L-histidine from 5-phospho-alpha-D-ribose 1-diphosphate: step 4/9. The protein is 1-(5-phosphoribosyl)-5-[(5-phosphoribosylamino)methylideneamino] imidazole-4-carboxamide isomerase of Azorhizobium caulinodans (strain ATCC 43989 / DSM 5975 / JCM 20966 / LMG 6465 / NBRC 14845 / NCIMB 13405 / ORS 571).